The sequence spans 240 residues: uncharacterized protein (240 aa).

The next 3 helical transmembrane spans lie at 12–32 (ICIH…ILMS), 66–86 (IQVL…FVLV), and 89–109 (ISGY…IYFF). N-linked (GlcNAc...) asparagine; by host glycosylation is found at Asn-129 and Asn-157.

The protein resides in the membrane. This is an uncharacterized protein from Acanthamoeba polyphaga mimivirus (APMV).